The sequence spans 79 residues: Putative antitoxin VapB1 (79 aa).

Its function is as follows. Antitoxin component of a possible type II toxin-antitoxin (TA) system. The cognate toxin is VapC1. The sequence is that of Putative antitoxin VapB1 (vapB1) from Mycobacterium tuberculosis (strain ATCC 25618 / H37Rv).